The primary structure comprises 156 residues: ATP synthase subunit b (156 aa).

Residues 7–26 (FIGQMVAFAIFIYLTYRYVW) form a helical membrane-spanning segment.

It belongs to the ATPase B chain family. F-type ATPases have 2 components, F(1) - the catalytic core - and F(0) - the membrane proton channel. F(1) has five subunits: alpha(3), beta(3), gamma(1), delta(1), epsilon(1). F(0) has three main subunits: a(1), b(2) and c(10-14). The alpha and beta chains form an alternating ring which encloses part of the gamma chain. F(1) is attached to F(0) by a central stalk formed by the gamma and epsilon chains, while a peripheral stalk is formed by the delta and b chains.

It localises to the cell inner membrane. Functionally, f(1)F(0) ATP synthase produces ATP from ADP in the presence of a proton or sodium gradient. F-type ATPases consist of two structural domains, F(1) containing the extramembraneous catalytic core and F(0) containing the membrane proton channel, linked together by a central stalk and a peripheral stalk. During catalysis, ATP synthesis in the catalytic domain of F(1) is coupled via a rotary mechanism of the central stalk subunits to proton translocation. Its function is as follows. Component of the F(0) channel, it forms part of the peripheral stalk, linking F(1) to F(0). The protein is ATP synthase subunit b of Cellvibrio japonicus (strain Ueda107) (Pseudomonas fluorescens subsp. cellulosa).